We begin with the raw amino-acid sequence, 254 residues long: Aquaporin TIP1-2 (254 aa).

2 helical membrane-spanning segments follow: residues 24 to 44 (VAEF…GMAF) and 56 to 76 (AGLI…VSVG). Residues 85 to 87 (NPA) carry the NPA 1 motif. A run of 3 helical transmembrane segments spans residues 103–123 (ALVY…LLKI), 144–164 (AVVL…ATAV), and 173–193 (VIAP…GGAF). Residues 199–201 (NPA) carry the NPA 2 motif. Residues 220 to 240 (WVGPLAGAAIAALVYDIIFIG) form a helical membrane-spanning segment.

This sequence belongs to the MIP/aquaporin (TC 1.A.8) family. TIP (TC 1.A.8.10) subfamily.

It localises to the vacuole membrane. Functionally, aquaporins facilitate the transport of water and small neutral solutes across cell membranes. The chain is Aquaporin TIP1-2 (TIP1-2) from Zea mays (Maize).